Reading from the N-terminus, the 436-residue chain is AMSH-like protease (436 aa).

Residue Met1 is modified to N-acetylmethionine. 2 positions are modified to phosphoserine: Ser25 and Ser242. The region spanning 269–397 (VVLPEDLCHK…IFRLTNAGML (129 aa)) is the MPN domain. Zn(2+)-binding residues include His347, His349, Asp360, His362, Cys402, His408, and His410. Residues 347-360 (HTHPTQTAFLSSVD) carry the JAMM motif motif.

Belongs to the peptidase M67C family. Zn(2+) serves as cofactor. In terms of tissue distribution, ubiquitously expressed.

With respect to regulation, inhibited by UbV(SP.1), an ubiquitin variant that also inhibits STAMBP. Zinc metalloprotease that specifically cleaves 'Lys-63'-linked polyubiquitin chains. Acts as a positive regulator of the TORC1 signaling pathway by mediating 'Lys-63'-linked deubiquitination of SESN2, thereby inhibiting SESN2-interaction with the GATOR2 complex. Does not cleave 'Lys-48'-linked polyubiquitin chains. The protein is AMSH-like protease of Homo sapiens (Human).